Consider the following 320-residue polypeptide: Calnexin-independence factor 1 (320 aa).

The interval 16–36 (SAETSVGEKQPKRKRSEVRAE) is disordered.

The protein localises to the nucleus. Its subcellular location is the nucleolus. In terms of biological role, induces a stably inheritable state of calnexin independence called the Cin state when overexpressed. The protein is Calnexin-independence factor 1 (cif1) of Schizosaccharomyces pombe (strain 972 / ATCC 24843) (Fission yeast).